The following is a 447-amino-acid chain: Chitobiosyldiphosphodolichol beta-mannosyltransferase (447 aa).

Residues 1 to 2 (MT) are Cytoplasmic-facing. Residues 3 to 23 (LVLLLSIFAICFSSVAFIQLL) form a helical; Signal-anchor for type II membrane protein membrane-spanning segment. Residues 24-447 (PTRREKKSSE…IAGTFLGLVT (424 aa)) lie on the Lumenal side of the membrane.

Belongs to the glycosyltransferase group 1 family. Glycosyltransferase 33 subfamily.

Its subcellular location is the endoplasmic reticulum membrane. It carries out the reaction an N,N'-diacetylchitobiosyl-diphospho-di-trans,poly-cis-dolichol + GDP-alpha-D-mannose = a beta-D-Man-(1-&gt;4)-beta-D-GlcNAc-(1-&gt;4)-alpha-D-GlcNAc-diphospho-di-trans,poly-cis-dolichol + GDP + H(+). It functions in the pathway protein modification; protein glycosylation. Participates in the formation of the lipid-linked precursor oligosaccharide for N-glycosylation. Involved in assembling the dolichol-pyrophosphate-GlcNAc(2)-Man(5) intermediate on the cytoplasmic surface of the ER. This chain is Chitobiosyldiphosphodolichol beta-mannosyltransferase, found in Arthroderma benhamiae (strain ATCC MYA-4681 / CBS 112371) (Trichophyton mentagrophytes).